The sequence spans 308 residues: Cell division protein ZipA (308 aa).

Topologically, residues 1-5 (MQELR) are periplasmic. Residues 6-26 (LVLILVGALAIAALLFHGLWT) traverse the membrane as a helical segment. Topologically, residues 27–308 (SRKETSSKFG…YKQRVKVFCN (282 aa)) are cytoplasmic. The segment at 43–90 (FDSESEDEQPTPARGFEQPKESVVDVRQERKEPAFGRDEPNLSQDPLF) is disordered. Positions 59–82 (EQPKESVVDVRQERKEPAFGRDEP) are enriched in basic and acidic residues.

It belongs to the ZipA family. In terms of assembly, interacts with FtsZ via their C-terminal domains.

The protein resides in the cell inner membrane. Its function is as follows. Essential cell division protein that stabilizes the FtsZ protofilaments by cross-linking them and that serves as a cytoplasmic membrane anchor for the Z ring. Also required for the recruitment to the septal ring of downstream cell division proteins. This Aliivibrio salmonicida (strain LFI1238) (Vibrio salmonicida (strain LFI1238)) protein is Cell division protein ZipA.